The primary structure comprises 224 residues: Claudin-19 (224 aa).

The Cytoplasmic portion of the chain corresponds to 1-7 (MANSGLQ). The chain crosses the membrane as a helical span at residues 8-28 (LLGYFLALGGWVGIIASTALP). The Extracellular segment spans residues 29–81 (QWKQSSYAGDAIITAVGLYEGLWMSCASQSTGQVQCKLYDSLLALDGHIQSAR). A disulfide bond links cysteine 54 and cysteine 64. Residues 82–102 (ALMVVAVLLGFVAMVLSVVGM) traverse the membrane as a helical segment. The Cytoplasmic segment spans residues 103 to 117 (KCTRVGDSNPIAKGR). The helical transmembrane segment at 118–138 (VAIAGGALFILAGLCTLTAVS) threads the bilayer. Residues 139-160 (WYATLVTQEFFNPSTPVNARYE) are Extracellular-facing. A helical membrane pass occupies residues 161-181 (FGPALFVGWASAGLAVLGGSF). Residues 182–224 (LCCTCPEPERPNSSPQPYRPGPSAAAREPVVKLPASAKGPLGV) lie on the Cytoplasmic side of the membrane. The tract at residues 191 to 224 (RPNSSPQPYRPGPSAAAREPVVKLPASAKGPLGV) is disordered.

The protein belongs to the claudin family. As to quaternary structure, can form homo- and heteropolymeric tight junction strands. Interacts with other claudins including CLDN3, CLDN10, CLDN16 and CLDN18 with highest affinity for CLDN16. Interacts (via PDZ-binding motif TRV) with TJP1 (via PDZ domain).

The protein resides in the cell junction. It localises to the tight junction. Its subcellular location is the cell membrane. It catalyses the reaction Mg(2+)(in) = Mg(2+)(out). The enzyme catalyses Ca(2+)(in) = Ca(2+)(out). It carries out the reaction Na(+)(in) = Na(+)(out). The catalysed reaction is K(+)(in) = K(+)(out). It catalyses the reaction Rb(+)(in) = Rb(+)(out). The enzyme catalyses Cs(+)(in) = Cs(+)(out). It carries out the reaction Li(+)(in) = Li(+)(out). Its function is as follows. Forms paracellular channels: coassembles with CLDN16 into tight junction strands with cation-selective channels through the strands, conveying epithelial permeability in a process known as paracellular tight junction permeability. Involved in the maintenance of ion gradients along the nephron. In the thick ascending limb (TAL) of Henle's loop, facilitates sodium paracellular permeability from the interstitial compartment to the lumen, contributing to the lumen-positive transepithelial potential that drives paracellular magnesium and calcium reabsorption. Forms paracellular barriers on its own. In the peripheral nervous system, represents a major constituent of the tight junctions in Schwann cells and contributes to electrical sealing. During retinal neurogenesis, may regulate the barrier properties of tight junctions in retinal pigment epithelium, required for proper retinal tissue differentiation and vision. The protein is Claudin-19 of Homo sapiens (Human).